Here is a 1242-residue protein sequence, read N- to C-terminus: DNA excision repair protein ERCC-6-like (1242 aa).

Phosphoserine is present on Ser14. One copy of the TPR 1 repeat lies at 21–54; it reads YLRYVKEAKEATKNGDLEQALKLFNLAKDIFPNE. Residues 109 to 277 enclose the Helicase ATP-binding domain; the sequence is SLYRDGRRGG…WSLFDFACQG (169 aa). An ATP-binding site is contributed by 122–129; sequence DDMGLGKT. The short motif at 228–231 is the DEAH box element; the sequence is DEAH. Residues 466–626 form the Helicase C-terminal domain; sequence FLMDLLKKLR…PFRYFSKQEL (161 aa). A phosphoserine mark is found at Ser755 and Ser773. Thr815 is modified (phosphothreonine). Phosphoserine is present on residues Ser963, Ser989, Ser998, and Ser1021. Phosphothreonine is present on Thr1055. Ser1061, Ser1090, and Ser1110 each carry phosphoserine. Positions 1103-1181 are disordered; that stretch reads EERLDNSSEA…LSDGQLVDSP (79 aa). Basic and acidic residues-rich tracts occupy residues 1105-1121 and 1130-1140; these read RLDNSSEAKVVEDHLEE and APEHTKEDPSR. The span at 1141–1156 shows a compositional bias: polar residues; that stretch reads ETLSSENKSSQLSTSK. Residues Ser1173 and Ser1180 each carry the phosphoserine modification. The stretch at 1192 to 1225 is one TPR 2 repeat; that stretch reads YDTLVLHGKELKECGKIQEALDCLVKALDIKSSD.

It belongs to the SNF2/RAD54 helicase family. In terms of assembly, interacts with PLK1, which phosphorylates it. Both proteins are mutually dependent on each other for correct subcellular localization. Interacts (via N-terminal TPR repeat) with BEND3 (via BEN domains 1 and 3); the interaction is direct. Phosphorylation by PLK1 prevents the association with chromosome arms and restricts its localization to the kinetochore-centromere region.

It is found in the chromosome. The protein resides in the centromere. It localises to the kinetochore. It catalyses the reaction ATP + H2O = ADP + phosphate + H(+). In terms of biological role, DNA helicase that acts as a tension sensor that associates with catenated DNA which is stretched under tension until it is resolved during anaphase. Functions as ATP-dependent DNA translocase. Can promote Holliday junction branch migration (in vitro). The polypeptide is DNA excision repair protein ERCC-6-like (ERCC6L) (Bos taurus (Bovine)).